Reading from the N-terminus, the 289-residue chain is Elongation factor Ts (289 aa).

Residues 82–85 (TDFV) are involved in Mg(2+) ion dislocation from EF-Tu.

This sequence belongs to the EF-Ts family.

It localises to the cytoplasm. In terms of biological role, associates with the EF-Tu.GDP complex and induces the exchange of GDP to GTP. It remains bound to the aminoacyl-tRNA.EF-Tu.GTP complex up to the GTP hydrolysis stage on the ribosome. This is Elongation factor Ts from Chloroherpeton thalassium (strain ATCC 35110 / GB-78).